Consider the following 275-residue polypeptide: 4-diphosphocytidyl-2-C-methyl-D-erythritol kinase (275 aa).

The active site involves Lys-15. Position 97-107 (97-107 (PMGSGLGGGSS)) interacts with ATP. Residue Asp-137 is part of the active site.

Belongs to the GHMP kinase family. IspE subfamily.

It carries out the reaction 4-CDP-2-C-methyl-D-erythritol + ATP = 4-CDP-2-C-methyl-D-erythritol 2-phosphate + ADP + H(+). It functions in the pathway isoprenoid biosynthesis; isopentenyl diphosphate biosynthesis via DXP pathway; isopentenyl diphosphate from 1-deoxy-D-xylulose 5-phosphate: step 3/6. Its function is as follows. Catalyzes the phosphorylation of the position 2 hydroxy group of 4-diphosphocytidyl-2C-methyl-D-erythritol. This is 4-diphosphocytidyl-2-C-methyl-D-erythritol kinase from Pseudothermotoga lettingae (strain ATCC BAA-301 / DSM 14385 / NBRC 107922 / TMO) (Thermotoga lettingae).